The primary structure comprises 621 residues: MTIIYFILAALALGILVLIHELGHLVVAKAVGMAVESFSIGFGPALFKKRIGGIEYRIGCIPFGGYVRIRGMERTKEKGEKGKIDSVYDIPQGFFSKSPWKRILVLVAGPLANILLAVLAFSILYMNGGRSKNYSDCSKVVGWVHPVLQAEGLLPGDEILTCNGKPYVGDKDMLTTSLLEGHLNLEIKRPGYLTVPSKEFAIDVEFDPTKFGVPCSGASYLLYGNQVPLTKNSPMENSELRPNDRFVWMDGTLLFSMAQISQILNESYAFVKVARNDKIFFSRQPRVLASVLHYTPYLRNELIDTQYEAGLKGKWSSLYTLPYVINSYGYIEGELTAIDPESPLPQPQERLQLGDRILAIDGTPVSGSVDILRLVQNHRVSIIVQQMSPQELEEVNSRDADKRFIASYHSEDLLQILNHLGESHPVEVAGPYRLLDPVQPRPWIDVYSSESLDKQLEVAKKIKNKDKQRYYLERLDAEKQKPSLGISLKDLKVRYNPSPVVMLSNITKESLITLKALVTGHLSPQWLSGPVGIVQVLHTGWSVGFSEVLFWIGLISMNLAVLNLLPIPVLDGGYILLCLWEIVTRRRLNMKIVERILVPFTFLLIIFFIFLTFQDLFRFFG.

Position 20 (H20) interacts with Zn(2+). Residue E21 is part of the active site. Residue H24 coordinates Zn(2+). 3 helical membrane passes run 103–125, 561–583, and 596–613; these read ILVLVAGPLANILLAVLAFSILY, VLNLLPIPVLDGGYILLCLWEIV, and ILVPFTFLLIIFFIFLTF.

Belongs to the peptidase M50B family. Zn(2+) serves as cofactor.

The protein resides in the cell inner membrane. This is Putative zinc metalloprotease CPn_0344/CP_0416/CPj0344/CpB0350 from Chlamydia pneumoniae (Chlamydophila pneumoniae).